The following is an 873-amino-acid chain: Protein SEY1 (873 aa).

Positions M1–H21 are disordered. Over M1–Q749 the chain is Cytoplasmic. The GB1/RHD3-type G domain maps to G49–A307. G59–S66 contributes to the GTP binding site. Positions S482–E506 form a coiled coil. The interval L676 to D703 is disordered. Residues A690 to D703 are compositionally biased toward acidic residues. The chain crosses the membrane as a helical span at residues V750–L770. Residues R771–P773 are Lumenal-facing. The chain crosses the membrane as a helical span at residues V774–L794. Residues W795 to F873 lie on the Cytoplasmic side of the membrane. Residues R828 to F873 are disordered. Positions A839–D863 are enriched in basic and acidic residues. Over residues E864 to F873 the composition is skewed to acidic residues.

This sequence belongs to the TRAFAC class dynamin-like GTPase superfamily. GB1/RHD3 GTPase family. RHD3 subfamily.

The protein localises to the endoplasmic reticulum membrane. Cooperates with the reticulon proteins and tubule-shaping DP1 family proteins to generate and maintain the structure of the tubular endoplasmic reticulum network. Has GTPase activity, which is required for its function in ER organization. The protein is Protein SEY1 of Ajellomyces capsulatus (strain G186AR / H82 / ATCC MYA-2454 / RMSCC 2432) (Darling's disease fungus).